Here is a 535-residue protein sequence, read N- to C-terminus: MTDQTTRLPIRRALISVSDKTGVVDFARELVALGVEILSTGGTYKLLRDNGISAVEVADYTGFPEMMDGRVKTLHPKVHGGILGRRDLDGAVMEQHGIKPIDLVAVNLYPFEATVARPDCDLPTAIENIDIGGPTMVRSAAKNHKDVAIVVNAGDYAAVIESLKAGGLTYAQRFDLALKAFEHTSAYDGMIANYLGTIDQTRDTLGTADRGAFPRTFNSQFVKAQEMRYGENPHQSAAFYVEAKKGEASVSTAIQLQGKELSFNNVADTDAALECVKSFLKPACVIVKHANPCGVAVVPEDEGGIRKAYDLAYATDSESAFGGIIAFNRELDGETAKAIVERQFVEVIIAPKISAAAREVVAAKANVRLLECGEWPAERAPGWDFKRVNGGLLVQSRDIGMIKAEDLKIVTRRAPTEQEIHDLIFAWKVAKFVKSNAIVYARNRQTVGVGAGQMSRVNSARIAAIKAEHAGLEVKGAVMASDAFFPFRDGIDNAAKAGITAVIQPGGSMRDNEVIAAADEADIAMVFTGMRHFRH.

The MGS-like domain occupies 6–151; the sequence is TRLPIRRALI…KNHKDVAIVV (146 aa).

This sequence belongs to the PurH family.

It catalyses the reaction (6R)-10-formyltetrahydrofolate + 5-amino-1-(5-phospho-beta-D-ribosyl)imidazole-4-carboxamide = 5-formamido-1-(5-phospho-D-ribosyl)imidazole-4-carboxamide + (6S)-5,6,7,8-tetrahydrofolate. The enzyme catalyses IMP + H2O = 5-formamido-1-(5-phospho-D-ribosyl)imidazole-4-carboxamide. Its pathway is purine metabolism; IMP biosynthesis via de novo pathway; 5-formamido-1-(5-phospho-D-ribosyl)imidazole-4-carboxamide from 5-amino-1-(5-phospho-D-ribosyl)imidazole-4-carboxamide (10-formyl THF route): step 1/1. It participates in purine metabolism; IMP biosynthesis via de novo pathway; IMP from 5-formamido-1-(5-phospho-D-ribosyl)imidazole-4-carboxamide: step 1/1. This is Bifunctional purine biosynthesis protein PurH from Pseudomonas aeruginosa (strain LESB58).